We begin with the raw amino-acid sequence, 503 residues long: Cytochrome P450 3A29 (503 aa).

Residue Cys442 participates in heme binding.

It belongs to the cytochrome P450 family. Requires heme as cofactor.

It is found in the endoplasmic reticulum membrane. The protein localises to the microsome membrane. It catalyses the reaction an organic molecule + reduced [NADPH--hemoprotein reductase] + O2 = an alcohol + oxidized [NADPH--hemoprotein reductase] + H2O + H(+). Its function is as follows. Cytochromes P450 are a group of heme-thiolate monooxygenases. In liver microsomes, this enzyme is involved in an NADPH-dependent electron transport pathway. It oxidizes a variety of structurally unrelated compounds, including steroids, fatty acids, and xenobiotics. This Sus scrofa (Pig) protein is Cytochrome P450 3A29 (CYP3A29).